A 374-amino-acid chain; its full sequence is DNA replication and repair protein RecF (374 aa).

34–41 (GDNGAGKT) lines the ATP pocket.

This sequence belongs to the RecF family.

The protein resides in the cytoplasm. Functionally, the RecF protein is involved in DNA metabolism; it is required for DNA replication and normal SOS inducibility. RecF binds preferentially to single-stranded, linear DNA. It also seems to bind ATP. In Rhizobium leguminosarum bv. trifolii (strain WSM2304), this protein is DNA replication and repair protein RecF.